The following is a 177-amino-acid chain: uncharacterized protein (177 aa).

To M.jannaschii MJ0628.

This is an uncharacterized protein from Methanocaldococcus jannaschii (strain ATCC 43067 / DSM 2661 / JAL-1 / JCM 10045 / NBRC 100440) (Methanococcus jannaschii).